A 595-amino-acid chain; its full sequence is Arginine--tRNA ligase (595 aa).

Residues 132 to 142 carry the 'HIGH' region motif; sequence ANPTGPLHVGH.

The protein belongs to the class-I aminoacyl-tRNA synthetase family. Monomer.

It is found in the cytoplasm. It catalyses the reaction tRNA(Arg) + L-arginine + ATP = L-arginyl-tRNA(Arg) + AMP + diphosphate. This chain is Arginine--tRNA ligase, found in Cupriavidus pinatubonensis (strain JMP 134 / LMG 1197) (Cupriavidus necator (strain JMP 134)).